Consider the following 509-residue polypeptide: Midnolin (509 aa).

A compositionally biased stretch (polar residues) spans 1 to 12 (MDQHPSARSCSS). The segment at 1–27 (MDQHPSARSCSSRGAAPSCESVSGEPP) is disordered. Residues 28-102 (MNLYIHSTTG…LTLVPTVEAG (75 aa)) enclose the Ubiquitin-like domain. Disordered stretches follow at residues 172 to 295 (GSSE…NTPL), 370 to 404 (QCTS…ETQP), and 448 to 485 (KRLR…EGSL). Low complexity predominate over residues 176–190 (GTTGLSHGASGSASG). Over residues 196–209 (HNPHPHHPHQHPHH) the composition is skewed to basic residues. The span at 220–231 (AFPPSPSIPSIP) shows a compositional bias: pro residues. Positions 261–285 (PSSACAPSPSSPSPAASCPEASCSA) are enriched in low complexity. Residues 286 to 295 (KTSGNCNTPL) show a composition bias toward polar residues. Residues 376–386 (SPAPSPPPSPP) show a composition bias toward pro residues. The segment covering 387 to 400 (HTTGLTGLPTTVPS) has biased composition (low complexity).

Its subcellular location is the nucleus. It is found in the cytoplasm. It localises to the cytosol. The protein resides in the nucleolus. In terms of biological role, facilitates ubiquitin-independent proteasomal degradation of polycomb protein CBX4. Plays a role in inhibiting the activity of glucokinase GCK and both glucose-induced and basal insulin secretion. The sequence is that of Midnolin (midn) from Danio rerio (Zebrafish).